The primary structure comprises 101 residues: MAKKSKIARNEQRKVIVERYAAKRLELKKALVDPNGTDESREAARAGIQRLPRDASPIRVRNRDGIDGRPRGNLSKFGISRVRFRDMAHRGELPGITKSSW.

Residues 36-72 (GTDESREAARAGIQRLPRDASPIRVRNRDGIDGRPRG) form a disordered region. Positions 61 to 70 (RNRDGIDGRP) are enriched in basic and acidic residues.

It belongs to the universal ribosomal protein uS14 family. As to quaternary structure, part of the 30S ribosomal subunit. Contacts proteins S3 and S10.

Functionally, binds 16S rRNA, required for the assembly of 30S particles and may also be responsible for determining the conformation of the 16S rRNA at the A site. The sequence is that of Small ribosomal subunit protein uS14 from Clavibacter michiganensis subsp. michiganensis (strain NCPPB 382).